A 410-amino-acid polypeptide reads, in one-letter code: Protein translocase subunit SecY (410 aa).

The next 9 helical transmembrane spans lie at 61 to 81 (LSVF…IQIL), 106 to 126 (ITKY…VLRL), 135 to 155 (LYFI…VMWL), 170 to 190 (VIIF…QLFV), 195 to 215 (FLDF…IVFV), 248 to 268 (QGGV…DYVI), 289 to 309 (ILFL…YCSL), 349 to 369 (LFGS…EFVF), and 373 to 393 (VFKG…IDLI).

It belongs to the SecY/SEC61-alpha family. Component of the plastid Sec protein translocase complex, which is composed of at least SecY and SecE.

It is found in the plastid. The protein resides in the chloroplast thylakoid membrane. Its function is as follows. The central subunit of the protein translocation channel SecYE. Consists of two halves formed by TMs 1-5 and 6-10. These two domains form a lateral gate at the front which open onto the bilayer between TMs 2 and 7, and are clamped together by SecE at the back. The channel is closed by both a pore ring composed of hydrophobic SecY resides and a short helix (helix 2A) on the extracellular side of the membrane which forms a plug. The protein is Protein translocase subunit SecY of Cyanidium caldarium (Red alga).